A 694-amino-acid chain; its full sequence is Protein NPGR1 (694 aa).

The interval 12-40 (FEDQPGSPESLATRDFSASGLSSRNGGGD) is disordered. TPR repeat units follow at residues 32-65 (LSSR…SLNY), 66-101 (EEAR…TPRI), 135-168 (LEAI…VENA), 188-221 (QKAL…PWNL), 307-340 (GERW…SESR), 551-584 (TEAW…CYYS), 585-618 (PRGW…EPDH), 620-654 (PSIV…DPRN), and 655-688 (HDAW…ELSA).

Interacts with calmodulin in a calcium-dependent manner. Expressed in pollen, flowers, fruits and leaves.

The sequence is that of Protein NPGR1 from Arabidopsis thaliana (Mouse-ear cress).